Reading from the N-terminus, the 311-residue chain is Homoserine kinase (311 aa).

88-98 (PEGLGLGSSGA) provides a ligand contact to ATP.

The protein belongs to the GHMP kinase family. Homoserine kinase subfamily.

The protein resides in the cytoplasm. The enzyme catalyses L-homoserine + ATP = O-phospho-L-homoserine + ADP + H(+). It functions in the pathway amino-acid biosynthesis; L-threonine biosynthesis; L-threonine from L-aspartate: step 4/5. Catalyzes the ATP-dependent phosphorylation of L-homoserine to L-homoserine phosphate. This chain is Homoserine kinase, found in Saccharolobus islandicus (strain Y.N.15.51 / Yellowstone #2) (Sulfolobus islandicus).